A 236-amino-acid chain; its full sequence is Probable glutathione S-transferase GSTU6 (236 aa).

Positions 5 to 84 constitute a GST N-terminal domain; the sequence is GELKLLGVWS…YIDEVWPGGA (80 aa). Residues Ser15, Lys42, Val56, and 68-69 contribute to the glutathione site; that span reads ES. Residues 94 to 228 form the GST C-terminal domain; the sequence is DPYERAVARF…KLLEFRQTLL (135 aa).

This sequence belongs to the GST superfamily. Tau family. As to expression, expressed in seedling shoots and roots.

It catalyses the reaction RX + glutathione = an S-substituted glutathione + a halide anion + H(+). Functionally, conjugation of reduced glutathione to a wide number of exogenous and endogenous hydrophobic electrophiles. This Oryza sativa subsp. japonica (Rice) protein is Probable glutathione S-transferase GSTU6 (GSTU6).